A 1136-amino-acid chain; its full sequence is Rho GTPase-activating protein 45 (1136 aa).

Disordered stretches follow at residues 1–73 (MFSR…RHAS) and 91–110 (HRSP…GAGP). A phosphoserine mark is found at serine 23, serine 25, serine 73, serine 93, and serine 99. Residues 269 to 539 (EEVDVLLQRC…SSKLYDPGQQ (271 aa)) enclose the F-BAR domain. Coiled-coil stretches lie at residues 376–412 (EHEK…YVQR) and 440–499 (TATK…RQSD). Serine 569, serine 578, serine 592, and serine 619 each carry phosphoserine. The interval 583 to 662 (DVARPEAAGS…SSTEELVDPD (80 aa)) is disordered. The span at 646 to 655 (TSSSGTMSST) shows a compositional bias: low complexity. The Phorbol-ester/DAG-type zinc-finger motif lies at 702 to 747 (THRLRKLRTPAKCRECNSYVYFQGAECEECCLACHKKCLETLAIQC). The Rho-GAP domain maps to 761-974 (QDFSHAARSA…TLIVHYGLVF (214 aa)). 4 positions are modified to phosphoserine: serine 949, serine 1027, serine 1030, and serine 1032. Residues 1061-1136 (EASLEVASGS…SCRERQPEFV (76 aa)) form a disordered region. The span at 1095 to 1109 (QQLSGFNTNQSNNVL) shows a compositional bias: polar residues.

In terms of assembly, HA-1 forms a complex with MHC class I HLA-A*0201. As to expression, expressed on cells of the hematopoietic lineage. Detected in dendritic cells and epidermal Langerhans cells. Expressed in peripheral blood mononuclear cells, in all leukemia/lymphoma cell lines. Detected also in some solid tumors and tissues such as cancerous and non-cancerous tissue.

The protein resides in the cytoplasm. It is found in the cell projection. It localises to the ruffle membrane. Contains a GTPase activator for the Rho-type GTPases (RhoGAP) domain that would be able to negatively regulate the actin cytoskeleton as well as cell spreading. However, also contains N-terminally a BAR-domin which is able to play an autoinhibitory effect on this RhoGAP activity. Its function is as follows. Precursor of the histocompatibility antigen HA-1. More generally, minor histocompatibility antigens (mHags) refer to immunogenic peptide which, when complexed with MHC, can generate an immune response after recognition by specific T-cells. The peptides are derived from polymorphic intracellular proteins, which are cleaved by normal pathways of antigen processing. The binding of these peptides to MHC class I or class II molecules and its expression on the cell surface can stimulate T-cell responses and thereby trigger graft rejection or graft-versus-host disease (GVHD) after hematopoietic stem cell transplantation from HLA-identical sibling donor. GVHD is a frequent complication after bone marrow transplantation (BMT), due to mismatch of minor histocompatibility antigen in HLA-matched sibling marrow transplants. Specifically, mismatching for mHag HA-1 which is recognized as immunodominant, is shown to be associated with the development of severe GVHD after HLA-identical BMT. HA-1 is presented to the cell surface by MHC class I HLA-A*0201, but also by other HLA-A alleles. This complex specifically elicits donor-cytotoxic T-lymphocyte (CTL) reactivity against hematologic malignancies after treatment by HLA-identical allogenic BMT. It induces cell recognition and lysis by CTL. In Homo sapiens (Human), this protein is Rho GTPase-activating protein 45.